The primary structure comprises 441 residues: EMI domain-containing protein 1 (441 aa).

The signal sequence occupies residues 1–22 (MGGPRAWALLCLGLLLPGGGAA). Residues 33–106 (RRNWCSYVVT…PGHSGVSCEE (74 aa)) enclose the EMI domain. 3 disulfide bridges follow: cysteine 37-cysteine 96, cysteine 62-cysteine 68, and cysteine 95-cysteine 104. Threonine 42 carries O-linked (Fuc) threonine glycosylation. Asparagine 51 is a glycosylation site (N-linked (GlcNAc...) asparagine). Asparagine 136 carries N-linked (GlcNAc...) asparagine glycosylation. 2 disordered regions span residues 162–371 (QPVP…KSHW) and 405–441 (SGAGPAGTGTPSLLRGKRGGHATNYRIVAPRSRDERG). Pro residues-rich tracts occupy residues 163 to 184 (PVPPTPATPEDPAPLWGPPPAQ) and 222 to 231 (PPGPQGPPGS). The 190-residue stretch at 179–368 (GPPPAQGSPG…PGPKGDPGEK (190 aa)) folds into the Collagen-like domain. The segment covering 232–243 (PGRAGAVGTPGE) has biased composition (low complexity). Residues 244–264 (RGPPGPPGPPGPPGPPAPVGP) show a composition bias toward pro residues. Residues 277–288 (LSNTFTETNNHW) are compositionally biased toward polar residues. The segment covering 292-311 (PTGPPGPPGPMGPPGPPGPT) has biased composition (pro residues). 2 stretches are compositionally biased toward basic and acidic residues: residues 335-344 (PGEKGERGLR) and 359-371 (PGPKGDPGEKSHW).

In terms of assembly, homo- or heteromers. Post-translationally, O-fucosylated at Thr-42 within the EMI domain by FUT10/POFUT3 and FUT11/POFUT4.

It is found in the secreted. It localises to the extracellular space. The protein resides in the extracellular matrix. The sequence is that of EMI domain-containing protein 1 (EMID1) from Homo sapiens (Human).